Here is a 161-residue protein sequence, read N- to C-terminus: SsrA-binding protein (161 aa).

The interval 140 to 161 (KRESIKERDWKRDKQRLLKDRG) is disordered.

Belongs to the SmpB family.

It is found in the cytoplasm. In terms of biological role, required for rescue of stalled ribosomes mediated by trans-translation. Binds to transfer-messenger RNA (tmRNA), required for stable association of tmRNA with ribosomes. tmRNA and SmpB together mimic tRNA shape, replacing the anticodon stem-loop with SmpB. tmRNA is encoded by the ssrA gene; the 2 termini fold to resemble tRNA(Ala) and it encodes a 'tag peptide', a short internal open reading frame. During trans-translation Ala-aminoacylated tmRNA acts like a tRNA, entering the A-site of stalled ribosomes, displacing the stalled mRNA. The ribosome then switches to translate the ORF on the tmRNA; the nascent peptide is terminated with the 'tag peptide' encoded by the tmRNA and targeted for degradation. The ribosome is freed to recommence translation, which seems to be the essential function of trans-translation. The chain is SsrA-binding protein from Sphingopyxis alaskensis (strain DSM 13593 / LMG 18877 / RB2256) (Sphingomonas alaskensis).